The primary structure comprises 143 residues: D-aminoacyl-tRNA deacylase (143 aa).

A Gly-cisPro motif, important for rejection of L-amino acids motif is present at residues 135–136 (GP).

It belongs to the DTD family. As to quaternary structure, homodimer.

The protein localises to the cytoplasm. It catalyses the reaction glycyl-tRNA(Ala) + H2O = tRNA(Ala) + glycine + H(+). The enzyme catalyses a D-aminoacyl-tRNA + H2O = a tRNA + a D-alpha-amino acid + H(+). In terms of biological role, an aminoacyl-tRNA editing enzyme that deacylates mischarged D-aminoacyl-tRNAs. Also deacylates mischarged glycyl-tRNA(Ala), protecting cells against glycine mischarging by AlaRS. Acts via tRNA-based rather than protein-based catalysis; rejects L-amino acids rather than detecting D-amino acids in the active site. By recycling D-aminoacyl-tRNA to D-amino acids and free tRNA molecules, this enzyme counteracts the toxicity associated with the formation of D-aminoacyl-tRNA entities in vivo and helps enforce protein L-homochirality. The chain is D-aminoacyl-tRNA deacylase from Mycolicibacterium gilvum (strain PYR-GCK) (Mycobacterium gilvum (strain PYR-GCK)).